Reading from the N-terminus, the 357-residue chain is Protein-glutamate methylesterase/protein-glutamine glutaminase (357 aa).

In terms of domain architecture, Response regulatory spans 3–120 (RVIVVDDSAF…LASMDLAALS (118 aa)). At aspartate 54 the chain carries 4-aspartylphosphate. One can recognise a CheB-type methylesterase domain in the interval 165-357 (ERSRRDIIAI…AERVASALYK (193 aa)). Residues serine 177, histidine 204, and aspartate 300 contribute to the active site.

This sequence belongs to the CheB family. In terms of processing, phosphorylated by CheA. Phosphorylation of the N-terminal regulatory domain activates the methylesterase activity.

Its subcellular location is the cytoplasm. It carries out the reaction [protein]-L-glutamate 5-O-methyl ester + H2O = L-glutamyl-[protein] + methanol + H(+). The enzyme catalyses L-glutaminyl-[protein] + H2O = L-glutamyl-[protein] + NH4(+). In terms of biological role, involved in chemotaxis. Part of a chemotaxis signal transduction system that modulates chemotaxis in response to various stimuli. Catalyzes the demethylation of specific methylglutamate residues introduced into the chemoreceptors (methyl-accepting chemotaxis proteins or MCP) by CheR. Also mediates the irreversible deamidation of specific glutamine residues to glutamic acid. The polypeptide is Protein-glutamate methylesterase/protein-glutamine glutaminase (Lawsonia intracellularis (strain PHE/MN1-00)).